The sequence spans 165 residues: NADH-ubiquinone oxidoreductase chain 6 (165 aa).

A run of 4 helical transmembrane segments spans residues 1–21 (MVVY…FYSL), 47–67 (SFVP…VFPY), 83–103 (GEVV…FDNF), and 130–150 (GVLV…ALII).

This sequence belongs to the complex I subunit 6 family.

It localises to the mitochondrion membrane. The enzyme catalyses a ubiquinone + NADH + 5 H(+)(in) = a ubiquinol + NAD(+) + 4 H(+)(out). Functionally, core subunit of the mitochondrial membrane respiratory chain NADH dehydrogenase (Complex I) that is believed to belong to the minimal assembly required for catalysis. Complex I functions in the transfer of electrons from NADH to the respiratory chain. The immediate electron acceptor for the enzyme is believed to be ubiquinone. The sequence is that of NADH-ubiquinone oxidoreductase chain 6 (ND6) from Strongylocentrotus purpuratus (Purple sea urchin).